The primary structure comprises 946 residues: Bifunctional glutamine synthetase adenylyltransferase/adenylyl-removing enzyme (946 aa).

Positions 1–440 (MKPLSSPLQQ…VFNELIGDDE (440 aa)) are adenylyl removase. Positions 449–946 (SEQWRELWQD…ASWQKWLVEE (498 aa)) are adenylyl transferase.

This sequence belongs to the GlnE family. Mg(2+) serves as cofactor.

The enzyme catalyses [glutamine synthetase]-O(4)-(5'-adenylyl)-L-tyrosine + phosphate = [glutamine synthetase]-L-tyrosine + ADP. It carries out the reaction [glutamine synthetase]-L-tyrosine + ATP = [glutamine synthetase]-O(4)-(5'-adenylyl)-L-tyrosine + diphosphate. Functionally, involved in the regulation of glutamine synthetase GlnA, a key enzyme in the process to assimilate ammonia. When cellular nitrogen levels are high, the C-terminal adenylyl transferase (AT) inactivates GlnA by covalent transfer of an adenylyl group from ATP to specific tyrosine residue of GlnA, thus reducing its activity. Conversely, when nitrogen levels are low, the N-terminal adenylyl removase (AR) activates GlnA by removing the adenylyl group by phosphorolysis, increasing its activity. The regulatory region of GlnE binds the signal transduction protein PII (GlnB) which indicates the nitrogen status of the cell. This is Bifunctional glutamine synthetase adenylyltransferase/adenylyl-removing enzyme from Escherichia coli O9:H4 (strain HS).